The chain runs to 355 residues: D-alanine--D-alanine ligase (355 aa).

The region spanning 143–350 is the ATP-grasp domain; sequence KQIFSNLSIP…IDQLVAKLID (208 aa). 178–233 serves as a coordination point for ATP; it reads IEKLNLPVFVKPANSGSSLGISKAKNKSEIIKALQKAWEIDSRIVIEEGLNVRELE. Residues Asp-303, Glu-317, and Asn-319 each coordinate Mg(2+).

This sequence belongs to the D-alanine--D-alanine ligase family. Mg(2+) is required as a cofactor. It depends on Mn(2+) as a cofactor.

Its subcellular location is the cytoplasm. The catalysed reaction is 2 D-alanine + ATP = D-alanyl-D-alanine + ADP + phosphate + H(+). The protein operates within cell wall biogenesis; peptidoglycan biosynthesis. Cell wall formation. This chain is D-alanine--D-alanine ligase, found in Prochlorococcus marinus (strain MIT 9515).